The primary structure comprises 278 residues: Octanoyl-[GcvH]:protein N-octanoyltransferase (278 aa).

Residues 44 to 249 (SQSPPTLRAW…TLQQHGASLL (206 aa)) enclose the BPL/LPL catalytic domain. The Acyl-thioester intermediate role is filled by cysteine 148.

Belongs to the octanoyltransferase LipL family.

It carries out the reaction N(6)-octanoyl-L-lysyl-[glycine-cleavage complex H protein] + L-lysyl-[lipoyl-carrier protein] = N(6)-octanoyl-L-lysyl-[lipoyl-carrier protein] + L-lysyl-[glycine-cleavage complex H protein]. It functions in the pathway protein modification; protein lipoylation via endogenous pathway; protein N(6)-(lipoyl)lysine from octanoyl-[acyl-carrier-protein]. Functionally, catalyzes the amidotransfer (transamidation) of the octanoyl moiety from octanoyl-GcvH to the lipoyl domain of the E2 subunit of lipoate-dependent enzymes. The sequence is that of Octanoyl-[GcvH]:protein N-octanoyltransferase from Halalkalibacterium halodurans (strain ATCC BAA-125 / DSM 18197 / FERM 7344 / JCM 9153 / C-125) (Bacillus halodurans).